The primary structure comprises 2541 residues: Talin-1 (2541 aa).

Positions 86 to 403 (RPLKIRMLDG…GYIDIILKKK (318 aa)) constitute an FERM domain. Residues 280–435 (FMAHKNCGNM…PKKSTVLQQQ (156 aa)) are interaction with LAYN. The helical bundle R1 stretch occupies residues 482–655 (RGHMPPLTSA…QTSGELLQQI (174 aa)). Residues 656–786 (GESDTDPRFQ…ALNDLLQHIK (131 aa)) form a helical bundle R2 region. Residues 787–911 (QHATGGQPIG…NAAAQNAIKK (125 aa)) form a helical bundle R3 region. Positions 913-1043 (LVHKLEHAAK…RTAAQKAQEA (131 aa)) are helical bundle R4. The helical bundle R5 stretch occupies residues 1045–1205 (GPLEIDSALG…NRCVNCLPGQ (161 aa)). The tract at residues 1206-1356 (RDVDAAIRMV…QLITMCTQQA (151 aa)) is helical bundle R6. The segment at 1357–1452 (PGQKECDNAL…AYLVGVSDPN (96 aa)) is helical bundle R7A. The interaction with VCL and F-actin stretch occupies residues 1358 to 1658 (GQKECDNALR…NMRDKAPGQR (301 aa)). Positions 1460 to 1579 (LVDPTQFARA…NLTAFASNPE (120 aa)) are helical bundle R8. A glycan (O-linked (GlcNAc) threonine) is linked at threonine 1486. The helical bundle R7B stretch occupies residues 1580–1652 (FATVPAQISP…IKKLITNMRD (73 aa)). A helical bundle R9 region spans residues 1654–1821 (APGQRECDEA…TLNEAASAAG (168 aa)). The helical bundle R10 stretch occupies residues 1822–1972 (VVGGMVDSIT…VLAALQAGNR (151 aa)). Threonine 1889 is a glycosylation site (O-linked (GlcNAc) threonine). The interval 1973–2139 (GTQACITAAS…TVKAVEDEAT (167 aa)) is helical bundle R11. Residues 2140-2293 (KGTRALEATI…QAAEAMKGTE (154 aa)) are helical bundle R12. The I/LWEQ domain occupies 2292 to 2531 (TEWVDPEDPT…MIRQQQYKFL (240 aa)). The tract at residues 2299–2481 (DPTVIAENEL…AAQKAAAFQD (183 aa)) is helical bundle R13.

In terms of assembly, interacts with PIP5K1C and NRAP. Binds with high affinity to vinculin VCL and with low affinity to integrins. Interacts with APBB1IP; this inhibits VCL binding. Interacts with F-actin. Interacts with LAYN. Interacts with THSD1. In terms of processing, phosphorylated.

Its subcellular location is the cell projection. The protein localises to the ruffle membrane. It localises to the cytoplasm. It is found in the cytoskeleton. The protein resides in the cell surface. Its subcellular location is the cell junction. The protein localises to the focal adhesion. Its function is as follows. High molecular weight cytoskeletal protein concentrated at regions of cell-substratum contact and, in lymphocytes, at cell-cell contacts. Involved in connections of major cytoskeletal structures to the plasma membrane. The polypeptide is Talin-1 (TLN1) (Gallus gallus (Chicken)).